The chain runs to 124 residues: Holo-[acyl-carrier-protein] synthase (124 aa).

Aspartate 7 and glutamate 55 together coordinate Mg(2+).

This sequence belongs to the P-Pant transferase superfamily. AcpS family. Mg(2+) is required as a cofactor.

The protein localises to the cytoplasm. The catalysed reaction is apo-[ACP] + CoA = holo-[ACP] + adenosine 3',5'-bisphosphate + H(+). Its function is as follows. Transfers the 4'-phosphopantetheine moiety from coenzyme A to a Ser of acyl-carrier-protein. In Borrelia garinii subsp. bavariensis (strain ATCC BAA-2496 / DSM 23469 / PBi) (Borreliella bavariensis), this protein is Holo-[acyl-carrier-protein] synthase.